A 565-amino-acid chain; its full sequence is Laccase-12 (565 aa).

Residues 1-24 (MTTVHTFSILLFFCSLFSASLIIA) form the signal peptide. Plastocyanin-like domains are found at residues 32-148 (VIQE…PTPG) and 158-310 (RQTA…YKKT). Asn-78 is a glycosylation site (N-linked (GlcNAc...) asparagine). His-82, His-84, His-127, and His-129 together coordinate Cu cation. Asn-187, Asn-203, Asn-298, Asn-325, Asn-377, Asn-387, Asn-395, and Asn-428 each carry an N-linked (GlcNAc...) asparagine glycan. The 137-residue stretch at 413-549 (DFPSKPPVKF…AMAFLVDNGV (137 aa)) folds into the Plastocyanin-like 3 domain. Positions 466, 469, 471, 528, 529, 530, and 534 each coordinate Cu cation.

Belongs to the multicopper oxidase family. Cu cation is required as a cofactor. In terms of tissue distribution, predominantly expressed in the inflorescence stem.

The protein localises to the secreted. It localises to the extracellular space. Its subcellular location is the apoplast. The enzyme catalyses 4 hydroquinone + O2 = 4 benzosemiquinone + 2 H2O. Its function is as follows. Lignin degradation and detoxification of lignin-derived products. The sequence is that of Laccase-12 (LAC12) from Arabidopsis thaliana (Mouse-ear cress).